A 319-amino-acid chain; its full sequence is Zinc metalloproteinase/disintegrin (319 aa).

The propeptide occupies 1 to 28 (EDEAPKMCGVTQNWESYEPIKKASQSNL). The Peptidase M12B domain maps to 34–230 (RYIELVIVAD…QKPQCILNKP (197 aa)). 2 residues coordinate Ca(2+): E37 and D121. 3 cysteine pairs are disulfide-bonded: C145–C225, C185–C209, and C187–C192. H170 is a Zn(2+) binding site. E171 is a catalytic residue. H174 and H180 together coordinate Zn(2+). Positions 225 and 228 each coordinate Ca(2+). Residues 231–246 (LRTDTVSTPVSGNELL) constitute a propeptide that is removed on maturation. The region spanning 238 to 319 (TPVSGNELLE…AGCPRNPFHA (82 aa)) is the Disintegrin domain. 6 cysteine pairs are disulfide-bonded: C252/C267, C254/C262, C261/C284, C275/C281, C280/C305, and C293/C312. The Cell attachment site signature appears at 297-299 (RGD).

The protein belongs to the venom metalloproteinase (M12B) family. P-II subfamily. P-IIa sub-subfamily. As to quaternary structure, monomer. It depends on Zn(2+) as a cofactor. As to expression, expressed by the venom gland.

It is found in the secreted. Excess of calcium ions significantly suppress the autoproteolysis of the enzyme. In terms of biological role, metalloproteinase that impairs hemostasis in the envenomed animal. Shows autoproteolysis dependent on pH and temperature. Does not show hemorrhagic activity. Functionally, inhibits platelet aggregation induced by ADP (IC(50) is 200 nM), collagen (IC(50) is 500 nM), thrombin and epinephrin (IC(50) is 300 nM). Does not inhibit aggregation induced by ristocetin. Its function is as follows. Inhibits platelet aggregation induced by ADP (IC(50) is 100 nM), collagen (IC(50) is 500 nM), thrombin and epinephrin (IC(50) is 300 nM). Does not inhibit aggregation induced by ristocetin. Significantly inhibits angiogenesis both in vivo and in vitro. This chain is Zinc metalloproteinase/disintegrin, found in Gloydius brevicauda (Korean slamosa snake).